The chain runs to 659 residues: Tetratricopeptide repeat protein 30 homolog (659 aa).

TPR repeat units lie at residues 3–36 (SQNMLIRDGEYTKSIYTMIKEERFQEAINVLNGI), 43–76 (RAGLSLLGHCYYQTQDFIEASNCYEYLVNLVPDV), 143–176 (ATVKNDEGCLLFQANMFEDALQRYVSALQAGGFN), 178–210 (HIAYNAALCHYRKKENSQALNYIAEIVERGIRN), 391–424 (CRSAPDQNALRVALREYEFALESYLPVAMARAWI), 450–483 (TWRLHAAHVLFMRGDRYKEAAAFYEPIVRQNYDD), and 533–566 (CIVNLVIGTLYCAKGNYEFGLSRIAHALDGGSGA).

Belongs to the TTC30/dfy-1/fleer family.

The protein resides in the cell projection. Its subcellular location is the cilium. Required for polyglutamylation of axonemal tubulin in sensory cilia. Plays a role in anterograde intraflagellar transport (IFT), the process by which cilia precursors are transported from the base of the cilium to the site of their incorporation at the tip. The polypeptide is Tetratricopeptide repeat protein 30 homolog (Aedes aegypti (Yellowfever mosquito)).